Here is a 257-residue protein sequence, read N- to C-terminus: UPF0246 protein ACICU_02469 (257 aa).

It belongs to the UPF0246 family.

This chain is UPF0246 protein ACICU_02469, found in Acinetobacter baumannii (strain ACICU).